We begin with the raw amino-acid sequence, 94 residues long: Pyrimidine/purine nucleoside phosphorylase (94 aa).

The protein belongs to the nucleoside phosphorylase PpnP family.

The catalysed reaction is a purine D-ribonucleoside + phosphate = a purine nucleobase + alpha-D-ribose 1-phosphate. It catalyses the reaction adenosine + phosphate = alpha-D-ribose 1-phosphate + adenine. The enzyme catalyses cytidine + phosphate = cytosine + alpha-D-ribose 1-phosphate. It carries out the reaction guanosine + phosphate = alpha-D-ribose 1-phosphate + guanine. The catalysed reaction is inosine + phosphate = alpha-D-ribose 1-phosphate + hypoxanthine. It catalyses the reaction thymidine + phosphate = 2-deoxy-alpha-D-ribose 1-phosphate + thymine. The enzyme catalyses uridine + phosphate = alpha-D-ribose 1-phosphate + uracil. It carries out the reaction xanthosine + phosphate = alpha-D-ribose 1-phosphate + xanthine. Functionally, catalyzes the phosphorolysis of diverse nucleosides, yielding D-ribose 1-phosphate and the respective free bases. Can use uridine, adenosine, guanosine, cytidine, thymidine, inosine and xanthosine as substrates. Also catalyzes the reverse reactions. The polypeptide is Pyrimidine/purine nucleoside phosphorylase (Pseudomonas entomophila (strain L48)).